A 268-amino-acid polypeptide reads, in one-letter code: Microtubule-associated protein RP/EB family member 1 (268 aa).

Residue Ala2 is modified to N-acetylalanine. One can recognise a Calponin-homology (CH) domain in the interval 14–116; it reads NLSRHDMLAW…FVQWFKKFFD (103 aa). Position 66 is an N6-crotonyllysine (Lys66). Tyr124 bears the Phosphotyrosine mark. Residues 124-268 form an interaction with MTUS2/TIP150 region; it reads YDPVAARQGQ…GGPQEEQEEY (145 aa). Residues 146 to 187 form a disordered region; it reads LNKPKKPLTSSSAAPQRPISTQRTAAAPKAGPGVVRKNPGVG. The span at 153-169 shows a compositional bias: polar residues; it reads LTSSSAAPQRPISTQRT. A phosphoserine mark is found at Ser155 and Ser165. One can recognise an EB1 C-terminal domain in the interval 185 to 255; sequence GVGNGDDEAA…LYATDEGFVI (71 aa). The interaction with CDK5RAP2 stretch occupies residues 185 to 268; the sequence is GVGNGDDEAA…GGPQEEQEEY (84 aa). The segment at 206-211 is interaction with APC; that stretch reads TVEDLE. A DCTN1-binding region spans residues 208–268; that stretch reads EDLEKERDFY…GGPQEEQEEY (61 aa). Lys220 is modified (N6-acetyllysine). The APC-binding stretch occupies residues 220–242; the sequence is KLRNIELICQENEGENDPVLQRI. Positions 232-255 are interaction with SKA1; that stretch reads EGENDPVLQRIVDILYATDEGFVI.

It belongs to the MAPRE family. In terms of assembly, homodimer. Heterodimer with MAPRE3. Interacts with DCTN1, DCTN2, TERF1 and dynein intermediate chain. Interaction with DIAPH1 and DIAPH2. Interacts (via C-terminal residues 206-211) with APC (via C-terminal residues 2674-2843); the interaction inhibits association with and bundling of F-actin. Interacts with CLASP2, DST, KIF2C and STIM1; probably required for their targeting to the growing microtubule plus ends. Interacts with MTUS2; interaction is direct and probably targets MTUS2 to microtubules. Interacts (via C-terminus) with SKA1 (via SXIP motif); the interaction is direct and stabilizes the kinetochore-microtubule attachment of the SKA1 complex. Interacts with APC2. Interacts with CLASP1. Interacts with CDK5RAP2. Interacts with MACF1. Interacts with RABL2/RABL2A; binds preferentially to GTP-bound RABL2. Interacts with KCNAB2. Interacts (via C-terminus) with CLIP1. Interacts with SLAIN2 and SLAIN1. Interacts with KIF18B; this interaction is required for efficient accumulation of KIF18B at microtubule plus ends. Interacts with MISP. Interacts with KNSTRN. Interacts with NCKAP5L. Interacts with CAMSAP2. Interacts with PDE4DIP isoform 13/MMG8/SMYLE; this interaction is required for its recruitment to the Golgi apparatus. Forms a pericentrosomal complex with AKAP9, CDK5RAP2 and PDE4DIP isoform 13/MMG8/SMYLE; within this complex, MAPRE1 binding to CDK5RAP2 may be mediated by PDE4DIP. Interacts with AKNA. Interacts with GAS2L1, GAS2L2, and GAS2L3. Interacts with RARRES1 and AGBL2. In terms of processing, acetylation at Lys-220 by KAT2B/PCAF promotes dynamic kinetochore-microtubule interactions in early mitosis. Post-translationally, crotonylated by KAT5 during mitosis, promoting astral microtubule plasticity and dynamic connection between astral microtubules and the cortex during mitotic chromosome segregation, thereby ensuring accurate spindle positioning in mitosis. Decrotonylated by HDAC3. As to expression, ubiquitously expressed.

It is found in the cytoplasm. The protein resides in the cytoskeleton. The protein localises to the microtubule organizing center. It localises to the centrosome. Its subcellular location is the golgi apparatus. It is found in the spindle. The protein resides in the spindle pole. In terms of biological role, plus-end tracking protein (+TIP) that binds to the plus-end of microtubules and regulates the dynamics of the microtubule cytoskeleton. Recruits other +TIP proteins to microtubules by binding to a conserved Ser-X-Leu-Pro (SXLP) motif in their polypeptide chains. Promotes cytoplasmic microtubule nucleation and elongation. Involved in mitotic spindle positioning by stabilizing microtubules and promoting dynamic connection between astral microtubules and the cortex during mitotic chromosome segregation. Assists chromosome alignment in metaphase by recruiting the SKA complex to the spindle and stabilizing its interactions with microtubule bundles (K-fibers). Also acts as a regulator of minus-end microtubule organization: interacts with the complex formed by AKAP9 and PDE4DIP, leading to recruit CAMSAP2 to the Golgi apparatus, thereby tethering non-centrosomal minus-end microtubules to the Golgi, an important step for polarized cell movement. Promotes elongation of CAMSAP2-decorated microtubule stretches on the minus-end of microtubules. Acts as a regulator of autophagosome transport via interaction with CAMSAP2. Functions downstream of Rho GTPases and DIAPH1 in stable microtubule formation. May play a role in cell migration. In Homo sapiens (Human), this protein is Microtubule-associated protein RP/EB family member 1.